The sequence spans 132 residues: MAFDGTWKVDRNENYEKFMEKMGINVMKRKLGAHDNLKLTITQDGNKFTVKESSNFRNIDVVFELGVNFPYSLADGTELTGAWTIEGNKLIGKFTRVDNGKELIAVREVSGNELIQTYTYEGVEAKRFFKKE.

A2 carries the N-acetylalanine modification. 2 residues coordinate hexadecanoate: W83 and R107. Tetradecanoate is bound by residues W83 and R107.

The protein belongs to the calycin superfamily. Fatty-acid binding protein (FABP) family. As to expression, expressed in the small intestine. Highest expression levels in the proximal ileum.

Its subcellular location is the cytoplasm. Functionally, FABPs are thought to play a role in the intracellular transport of long-chain fatty acids and their acyl-CoA esters. FABP2 is probably involved in triglyceride-rich lipoprotein synthesis. Binds saturated long-chain fatty acids with a high affinity, but binds with a lower affinity to unsaturated long-chain fatty acids. FABP2 may also help maintain energy homeostasis by functioning as a lipid sensor. This is Fatty acid-binding protein, intestinal (Fabp2) from Mus musculus (Mouse).